Consider the following 238-residue polypeptide: CS1 fimbrial subunit B (238 aa).

The N-terminal stretch at 1 to 17 (MRKLFLSLLMIPFVAKA) is a signal peptide.

It is found in the fimbrium. Might function as a shuttle protein in the transport of fimbria through the periplasmic space or might function as an adhesin. This Escherichia coli protein is CS1 fimbrial subunit B (csoB).